The sequence spans 341 residues: tRNA N6-adenosine threonylcarbamoyltransferase (341 aa).

Fe cation contacts are provided by histidine 117 and histidine 121. Substrate is bound by residues 140–144 (VVSGG), aspartate 173, glycine 186, and asparagine 278. Aspartate 306 lines the Fe cation pocket.

It belongs to the KAE1 / TsaD family. The cofactor is Fe(2+).

Its subcellular location is the cytoplasm. The enzyme catalyses L-threonylcarbamoyladenylate + adenosine(37) in tRNA = N(6)-L-threonylcarbamoyladenosine(37) in tRNA + AMP + H(+). Functionally, required for the formation of a threonylcarbamoyl group on adenosine at position 37 (t(6)A37) in tRNAs that read codons beginning with adenine. Is involved in the transfer of the threonylcarbamoyl moiety of threonylcarbamoyl-AMP (TC-AMP) to the N6 group of A37, together with TsaE and TsaB. TsaD likely plays a direct catalytic role in this reaction. In Symbiobacterium thermophilum (strain DSM 24528 / JCM 14929 / IAM 14863 / T), this protein is tRNA N6-adenosine threonylcarbamoyltransferase.